The following is a 768-amino-acid chain: Probable dipeptidyl peptidase 4 (768 aa).

Positions 1–17 are cleaved as a signal peptide; sequence MKLGKWSVLLLVGCTAA. N-linked (GlcNAc...) asparagine glycosylation is found at asparagine 38, asparagine 81, asparagine 104, asparagine 113, asparagine 221, asparagine 282, and asparagine 468. Residue serine 616 is the Charge relay system of the active site. Asparagine 668 carries an N-linked (GlcNAc...) asparagine glycan. Residues aspartate 693 and histidine 728 each act as charge relay system in the active site.

This sequence belongs to the peptidase S9B family.

The protein resides in the secreted. It carries out the reaction Release of an N-terminal dipeptide, Xaa-Yaa-|-Zaa-, from a polypeptide, preferentially when Yaa is Pro, provided Zaa is neither Pro nor hydroxyproline.. Its function is as follows. Extracellular dipeptidyl-peptidase which removes N-terminal dipeptides sequentially from polypeptides having unsubstituted N-termini provided that the penultimate residue is proline. In Aspergillus clavatus (strain ATCC 1007 / CBS 513.65 / DSM 816 / NCTC 3887 / NRRL 1 / QM 1276 / 107), this protein is Probable dipeptidyl peptidase 4 (dpp4).